The sequence spans 226 residues: Glycerol-3-phosphate acyltransferase (226 aa).

6 helical membrane passes run 1–21 (MGFW…LGSF), 60–80 (FVLG…YYLF), 102–122 (LVTL…FLGF), 134–154 (ILLA…AVVV), 159–178 (IVSL…MVFL), and 182–197 (LPYI…YVIL).

This sequence belongs to the PlsY family. In terms of assembly, probably interacts with PlsX.

Its subcellular location is the cell inner membrane. The catalysed reaction is an acyl phosphate + sn-glycerol 3-phosphate = a 1-acyl-sn-glycero-3-phosphate + phosphate. Its pathway is lipid metabolism; phospholipid metabolism. Its function is as follows. Catalyzes the transfer of an acyl group from acyl-phosphate (acyl-PO(4)) to glycerol-3-phosphate (G3P) to form lysophosphatidic acid (LPA). This enzyme utilizes acyl-phosphate as fatty acyl donor, but not acyl-CoA or acyl-ACP. The polypeptide is Glycerol-3-phosphate acyltransferase (Nostoc sp. (strain PCC 7120 / SAG 25.82 / UTEX 2576)).